An 89-amino-acid chain; its full sequence is Small ribosomal subunit protein bS20 (89 aa).

The segment at 1-20 (MANHKSAEKRARQTIKRTER) is disordered.

It belongs to the bacterial ribosomal protein bS20 family.

Functionally, binds directly to 16S ribosomal RNA. In Campylobacter curvus (strain 525.92), this protein is Small ribosomal subunit protein bS20.